The sequence spans 196 residues: Small ribosomal subunit protein uS4c (196 aa).

Residues 16–36 (GALPGLTRKTPKSGSNLKKKF) form a disordered region. Residues 89-169 (MRLDNILFRL…LPKHLTIDTL (81 aa)) form the S4 RNA-binding domain.

This sequence belongs to the universal ribosomal protein uS4 family. In terms of assembly, part of the 30S ribosomal subunit. Contacts protein S5. The interaction surface between S4 and S5 is involved in control of translational fidelity.

The protein resides in the plastid. It is found in the chloroplast. Its function is as follows. One of the primary rRNA binding proteins, it binds directly to 16S rRNA where it nucleates assembly of the body of the 30S subunit. With S5 and S12 plays an important role in translational accuracy. The chain is Small ribosomal subunit protein uS4c (rps4) from Cinna latifolia (Drooping woodreed).